The primary structure comprises 484 residues: Aldehyde dehydrogenase family 3 member H1 (484 aa).

196-201 serves as a coordination point for NAD(+); it reads GSSKIG. The Proton acceptor role is filled by E218. C253 (nucleophile) is an active-site residue.

The protein belongs to the aldehyde dehydrogenase family. As to quaternary structure, homodimer and homomultimer. In terms of tissue distribution, isoform alpha is expressed in expanded leaves and flowers. Detected in seedlings. Isoform beta is mainly expressed in flowers. Detected in leaves and seedlings.

The enzyme catalyses an aldehyde + NAD(+) + H2O = a carboxylate + NADH + 2 H(+). With respect to regulation, thiol-based regulation. Inactivation after dimerization under oxidizing conditions. Involved in oxidative stress tolerance by detoxifying reactive aldehydes derived from lipid peroxidation. Medium- to long-chain saturated aldehydes are preferred substrates, while the short-chain aldehyde propanal is a weak substrate. Is strictely NAD(+) specific. The protein is Aldehyde dehydrogenase family 3 member H1 (ALDH3H1) of Arabidopsis thaliana (Mouse-ear cress).